The primary structure comprises 343 residues: Heat-inducible transcription repressor HrcA (343 aa).

Belongs to the HrcA family.

Functionally, negative regulator of class I heat shock genes (grpE-dnaK-dnaJ and groELS operons). Prevents heat-shock induction of these operons. The polypeptide is Heat-inducible transcription repressor HrcA (Mycolicibacterium vanbaalenii (strain DSM 7251 / JCM 13017 / BCRC 16820 / KCTC 9966 / NRRL B-24157 / PYR-1) (Mycobacterium vanbaalenii)).